Reading from the N-terminus, the 335-residue chain is Beta-hexosaminidase (335 aa).

Substrate is bound by residues Asp-60, Arg-68, Arg-133, and 163–164 (KH). Catalysis depends on His-176, which acts as the Proton donor/acceptor. Asp-247 (nucleophile) is an active-site residue.

Belongs to the glycosyl hydrolase 3 family. NagZ subfamily.

The protein localises to the cytoplasm. The enzyme catalyses Hydrolysis of terminal non-reducing N-acetyl-D-hexosamine residues in N-acetyl-beta-D-hexosaminides.. It participates in cell wall biogenesis; peptidoglycan recycling. Functionally, plays a role in peptidoglycan recycling by cleaving the terminal beta-1,4-linked N-acetylglucosamine (GlcNAc) from peptide-linked peptidoglycan fragments, giving rise to free GlcNAc, anhydro-N-acetylmuramic acid and anhydro-N-acetylmuramic acid-linked peptides. This is Beta-hexosaminidase from Stenotrophomonas maltophilia (strain R551-3).